A 449-amino-acid polypeptide reads, in one-letter code: Phosphoglucosamine mutase (449 aa).

S100 serves as the catalytic Phosphoserine intermediate. Mg(2+) contacts are provided by S100, D241, D243, and D245. A Phosphoserine modification is found at S100.

It belongs to the phosphohexose mutase family. It depends on Mg(2+) as a cofactor. Activated by phosphorylation.

It carries out the reaction alpha-D-glucosamine 1-phosphate = D-glucosamine 6-phosphate. Functionally, catalyzes the conversion of glucosamine-6-phosphate to glucosamine-1-phosphate. In Geobacillus kaustophilus (strain HTA426), this protein is Phosphoglucosamine mutase.